The following is a 270-amino-acid chain: Interleukin-33 (270 aa).

Residues 1–65 are homeodomain-like HTH domain; sequence MKPKMKYSTN…EACYFRRETT (65 aa). A propeptide spanning residues 1 to 94 is cleaved from the precursor; the sequence is MKPKMKYSTN…CQQQSTVECF (94 aa). Residues 64–111 form an interaction with RELA region; it reads TTKRPSLKTGRKHKRHLVLAACQQQSTVECFAFGISGVQKYTRALHDS.

This sequence belongs to the IL-1 family. Highly divergent. As to quaternary structure, forms a 1:1:1 heterotrimeric complex with its primary high-affinity receptor IL1RL1 and the coreceptor IL1RAP. Interacts with cargo receptor TMED10; the interaction mediates the translocation from the cytoplasm into the ERGIC (endoplasmic reticulum-Golgi intermediate compartment) and thereby secretion. (Microbial infection) Interacts (in reduced form) with H.polygyrus ARI. The full-length protein can be released from cells and is able to signal via the IL1RL1/ST2 receptor. However, proteolytic processing by CELA1, CSTG/cathepsin G and ELANE/neutrophil elastase produces C-terminal peptides that are more active than the unprocessed full length protein. May also be proteolytically processed by calpains. Proteolytic cleavage mediated by apoptotic caspases including CASP3 and CASP7 results in IL33 inactivation. In vitro proteolytic cleavage by CASP1 was reported but could not be confirmed in vivo suggesting that IL33 is probably not a direct substrate for that caspase. As to expression, expressed at high level in high endothelial venules found in tonsils, Peyer patches and mesenteric lymph nodes. Almost undetectable in placenta.

The protein resides in the nucleus. Its subcellular location is the chromosome. It is found in the cytoplasm. The protein localises to the cytoplasmic vesicle. It localises to the secretory vesicle. The protein resides in the secreted. In terms of biological role, cytokine that binds to and signals through the IL1RL1/ST2 receptor which in turn activates NF-kappa-B and MAPK signaling pathways in target cells. Involved in the maturation of Th2 cells inducing the secretion of T-helper type 2-associated cytokines. Also involved in activation of mast cells, basophils, eosinophils and natural killer cells. Acts as an enhancer of polarization of alternatively activated macrophages. Acts as a chemoattractant for Th2 cells, and may function as an 'alarmin', that amplifies immune responses during tissue injury. Induces rapid UCP2-dependent mitochondrial rewiring that attenuates the generation of reactive oxygen species and preserves the integrity of Krebs cycle required for persistent production of itaconate and subsequent GATA3-dependent differentiation of inflammation-resolving alternatively activated macrophages. In quiescent endothelia the uncleaved form is constitutively and abundantly expressed, and acts as a chromatin-associated nuclear factor with transcriptional repressor properties, it may sequester nuclear NF-kappaB/RELA, lowering expression of its targets. This form is rapidely lost upon angiogenic or pro-inflammatory activation. In Homo sapiens (Human), this protein is Interleukin-33.